A 273-amino-acid chain; its full sequence is Formamidopyrimidine-DNA glycosylase (273 aa).

The active-site Schiff-base intermediate with DNA is the Pro2. Glu3 acts as the Proton donor in catalysis. Residue Lys58 is the Proton donor; for beta-elimination activity of the active site. DNA is bound by residues His92, Arg111, and Lys153. Residues 238-272 (KVYGREGQSCLSCSSTIIKIKHSGRSTFYCKTCQY) form an FPG-type zinc finger. Catalysis depends on Arg262, which acts as the Proton donor; for delta-elimination activity.

This sequence belongs to the FPG family. In terms of assembly, monomer. The cofactor is Zn(2+).

It carries out the reaction Hydrolysis of DNA containing ring-opened 7-methylguanine residues, releasing 2,6-diamino-4-hydroxy-5-(N-methyl)formamidopyrimidine.. The catalysed reaction is 2'-deoxyribonucleotide-(2'-deoxyribose 5'-phosphate)-2'-deoxyribonucleotide-DNA = a 3'-end 2'-deoxyribonucleotide-(2,3-dehydro-2,3-deoxyribose 5'-phosphate)-DNA + a 5'-end 5'-phospho-2'-deoxyribonucleoside-DNA + H(+). In terms of biological role, involved in base excision repair of DNA damaged by oxidation or by mutagenic agents. Acts as a DNA glycosylase that recognizes and removes damaged bases. Has a preference for oxidized purines, such as 7,8-dihydro-8-oxoguanine (8-oxoG). Has AP (apurinic/apyrimidinic) lyase activity and introduces nicks in the DNA strand. Cleaves the DNA backbone by beta-delta elimination to generate a single-strand break at the site of the removed base with both 3'- and 5'-phosphates. This Rickettsia conorii (strain ATCC VR-613 / Malish 7) protein is Formamidopyrimidine-DNA glycosylase.